The primary structure comprises 238 residues: Uridylate kinase (238 aa).

ATP is bound at residue 12–15; sequence KLSG. G54 provides a ligand contact to UMP. Residues G55 and R59 each coordinate ATP. Residues D74 and 135–142 each bind UMP; that span reads TGNPFFTT. The ATP site is built by T162, Y168, and D171.

The protein belongs to the UMP kinase family. In terms of assembly, homohexamer.

It is found in the cytoplasm. It carries out the reaction UMP + ATP = UDP + ADP. It participates in pyrimidine metabolism; CTP biosynthesis via de novo pathway; UDP from UMP (UMPK route): step 1/1. Inhibited by UTP. Its function is as follows. Catalyzes the reversible phosphorylation of UMP to UDP. This Nitrosospira multiformis (strain ATCC 25196 / NCIMB 11849 / C 71) protein is Uridylate kinase.